The sequence spans 118 residues: Small ribosomal subunit protein uS13 (118 aa).

The interval 94 to 118 is disordered; that stretch reads GLPLRGQRTRTNARTRKGPRKAIRK.

It belongs to the universal ribosomal protein uS13 family. As to quaternary structure, part of the 30S ribosomal subunit. Forms a loose heterodimer with protein S19. Forms two bridges to the 50S subunit in the 70S ribosome.

Located at the top of the head of the 30S subunit, it contacts several helices of the 16S rRNA. In the 70S ribosome it contacts the 23S rRNA (bridge B1a) and protein L5 of the 50S subunit (bridge B1b), connecting the 2 subunits; these bridges are implicated in subunit movement. Contacts the tRNAs in the A and P-sites. The polypeptide is Small ribosomal subunit protein uS13 (Xanthomonas axonopodis pv. citri (strain 306)).